Consider the following 125-residue polypeptide: Small ribosomal subunit protein eS25 (125 aa).

The segment covering methionine 1–valine 23 has biased composition (basic and acidic residues). The disordered stretch occupies residues methionine 1–glycine 38. Residues glycine 28–glycine 38 show a composition bias toward basic residues. Lysine 43 bears the N6-acetyllysine mark. The residue at position 52 (lysine 52) is an N6-acetyllysine; alternate. At lysine 52 the chain carries N6-succinyllysine; alternate. N6-acetyllysine occurs at positions 60 and 66. Lysine 94 bears the N6-acetyllysine; alternate mark. At lysine 94 the chain carries N6-succinyllysine; alternate.

The protein belongs to the eukaryotic ribosomal protein eS25 family. Component of the small ribosomal subunit.

It is found in the cytoplasm. Component of the small ribosomal subunit. The ribosome is a large ribonucleoprotein complex responsible for the synthesis of proteins in the cell. This Homo sapiens (Human) protein is Small ribosomal subunit protein eS25 (RPS25).